We begin with the raw amino-acid sequence, 394 residues long: Bone morphogenetic protein 2 (394 aa).

The N-terminal stretch at 1–19 (MVAGTRCLLVLLLPQVLLG) is a signal peptide. Positions 20 to 280 (GAAGLIPELG…GHPLHKREKR (261 aa)) are cleaved as a propeptide — cleaved by PCSK5. Position 86 is a phosphoserine (serine 86). N-linked (GlcNAc...) asparagine glycans are attached at residues asparagine 134, asparagine 162, and asparagine 198. The segment at 269 to 291 (GKGHPLHKREKRQAKHKQRKRLK) is disordered. The segment covering 272 to 291 (HPLHKREKRQAKHKQRKRLK) has biased composition (basic residues). Intrachain disulfides connect cysteine 294–cysteine 359, cysteine 323–cysteine 391, and cysteine 327–cysteine 393. Asparagine 336 carries N-linked (GlcNAc...) asparagine glycosylation.

Belongs to the TGF-beta family. In terms of assembly, homodimer; disulfide-linked. Interacts with SOSTDC1. Interacts with GREM2, RGMA, RGMB and RGMC. Interacts with ASPN. Interacts with MAFP5. Interacts with FBN1 (via N-terminal domain) and FBN2. Interacts with type I receptor BMPR1A. Interacts with type II receptor BMPR2. Interacts with SCUBE3. Interacts with TNFAIP6 (primarily via Link domain); this interaction is inhibited by hyaluronan. Interacts with ERFE. Interacts with BMPR1A/ALK3; the interaction may induce HAMP expression. Forms heterodimers with BMP6 in vitro; the heterodimer then binds to its receptor BMPR1A /ALK3 and may induce HAMP expression. Interacts with TGFBR3.

It is found in the secreted. Growth factor of the TGF-beta superfamily that plays essential roles in many developmental processes, including cardiogenesis, neurogenesis, and osteogenesis. Induces cartilage and bone formation. Initiates the canonical BMP signaling cascade by associating with type I receptor BMPR1A and type II receptor BMPR2. Once all three components are bound together in a complex at the cell surface, BMPR2 phosphorylates and activates BMPR1A. In turn, BMPR1A propagates signal by phosphorylating SMAD1/5/8 that travel to the nucleus and act as activators and repressors of transcription of target genes. Also acts to promote expression of HAMP, via the interaction with its receptor BMPR1A/ALK3. Can also signal through non-canonical pathways such as ERK/MAP kinase signaling cascade that regulates osteoblast differentiation. Also stimulates the differentiation of myoblasts into osteoblasts via the EIF2AK3-EIF2A-ATF4 pathway by stimulating EIF2A phosphorylation which leads to increased expression of ATF4 which plays a central role in osteoblast differentiation. Acts as a positive regulator of odontoblast differentiation during mesenchymal tooth germ formation, expression is repressed during the bell stage by MSX1-mediated inhibition of CTNNB1 signaling. The sequence is that of Bone morphogenetic protein 2 (Bmp2) from Mus musculus (Mouse).